The primary structure comprises 119 residues: Ribonuclease P protein component (119 aa).

The protein belongs to the RnpA family. In terms of assembly, consists of a catalytic RNA component (M1 or rnpB) and a protein subunit.

It catalyses the reaction Endonucleolytic cleavage of RNA, removing 5'-extranucleotides from tRNA precursor.. Its function is as follows. RNaseP catalyzes the removal of the 5'-leader sequence from pre-tRNA to produce the mature 5'-terminus. It can also cleave other RNA substrates such as 4.5S RNA. The protein component plays an auxiliary but essential role in vivo by binding to the 5'-leader sequence and broadening the substrate specificity of the ribozyme. The sequence is that of Ribonuclease P protein component from Syntrophomonas wolfei subsp. wolfei (strain DSM 2245B / Goettingen).